Here is a 707-residue protein sequence, read N- to C-terminus: Choline transporter-like protein 4 (707 aa).

Residues 1–32 (MGEKQDPDKAYGKPAKYDPSFRGPIRNRSCTD) lie on the Cytoplasmic side of the membrane. The helical transmembrane segment at 33–53 (IICCVLFFVFILGYIAVGLVA) threads the bilayer. Over 54 to 226 (WVYGDPQQVL…KIFEDFAQSW (173 aa)) the chain is Extracellular. 4 N-linked (GlcNAc...) asparagine glycosylation sites follow: N67, N142, N184, and N195. The helical transmembrane segment at 227-247 (YWILAALGVALVLSLLFVLLL) threads the bilayer. At 248–249 (RL) the chain is on the cytoplasmic side. A helical membrane pass occupies residues 250-270 (VAGPLVFVLIIGVLGVLAYGI). Topologically, residues 271–306 (YHCWNEYRLLRDKGASISQLGFTTNLSAYSSVQETW) are extracellular. N-linked (GlcNAc...) asparagine glycosylation occurs at N295. The helical transmembrane segment at 307 to 327 (LAALILLAVLEGILLLMLIFL) threads the bilayer. Residues 328–355 (RQRIRIAIALLEEASRAVGQMMSTLFYP) lie on the Cytoplasmic side of the membrane. The chain crosses the membrane as a helical span at residues 356 to 376 (LVTFVLLLVCIAYWAMTALYL). The Extracellular portion of the chain corresponds to 377-452 (ATSGQPQYVL…GVLGLFWTIN (76 aa)). N390, N402, and N413 each carry an N-linked (GlcNAc...) asparagine glycan. Residues 453–473 (WVLALGQCVLAGAFASFYWAF) traverse the membrane as a helical segment. Residues 474–498 (HKPRDIPTFPLSSAFIRTLRYHTGS) are Cytoplasmic-facing. A helical transmembrane segment spans residues 499-519 (LAFGALILTLVQIARAILEYI). The Extracellular segment spans residues 520-557 (DHKLRGAQNPVARCIMCCFKCCLWCLEKFIKFLNRNAY). A helical transmembrane segment spans residues 558-578 (IMIAIYGKNFCVSAKNAFMLL). Over 579-594 (MRNIVRVVVLDKVTDL) the chain is Cytoplasmic. Residues 595-615 (LLFFGKLLVVGGVGVLSFFFF) traverse the membrane as a helical segment. Residues 616 to 635 (TGRIQGLGKDFESPQLNYYW) lie on the Extracellular side of the membrane. A helical membrane pass occupies residues 636 to 656 (LPIMTSIMGAYVIASGFFSVF). Over 657–707 (GMCVDTLFLCFLEDLERNDGSLDRPYYMSKALLKILGKKNEVPSGDKKRKK) the chain is Cytoplasmic.

This sequence belongs to the CTL (choline transporter-like) family. Post-translationally, N-glycosylated; N-glycosylation of Asn-677 and Asn-390 is required for a proper thiamine pyrophosphate uptake.

Its subcellular location is the membrane. The protein localises to the apical cell membrane. It carries out the reaction choline(out) + n H(+)(in) = choline(in) + n H(+)(out). The enzyme catalyses thiamine diphosphate(out) = thiamine diphosphate(in). Its function is as follows. Choline transporter that plays a role in the choline-acetylcholine system and is required to the efferent innervation of hair cells in the olivocochlear bundle for the maintenance of physiological function of outer hair cells and the protection of hair cells from acoustic injury. Also described as a thiamine pyrophosphate transporter in colon, may mediate the absorption of microbiota-generated thiamine pyrophosphate and contribute to host thiamine (vitamin B1) homeostasis. This chain is Choline transporter-like protein 4, found in Sus scrofa (Pig).